The sequence spans 253 residues: Imidazole glycerol phosphate synthase subunit HisF (253 aa).

Catalysis depends on residues Asp-11 and Asp-130.

The protein belongs to the HisA/HisF family. As to quaternary structure, heterodimer of HisH and HisF.

It is found in the cytoplasm. The enzyme catalyses 5-[(5-phospho-1-deoxy-D-ribulos-1-ylimino)methylamino]-1-(5-phospho-beta-D-ribosyl)imidazole-4-carboxamide + L-glutamine = D-erythro-1-(imidazol-4-yl)glycerol 3-phosphate + 5-amino-1-(5-phospho-beta-D-ribosyl)imidazole-4-carboxamide + L-glutamate + H(+). It participates in amino-acid biosynthesis; L-histidine biosynthesis; L-histidine from 5-phospho-alpha-D-ribose 1-diphosphate: step 5/9. IGPS catalyzes the conversion of PRFAR and glutamine to IGP, AICAR and glutamate. The HisF subunit catalyzes the cyclization activity that produces IGP and AICAR from PRFAR using the ammonia provided by the HisH subunit. The chain is Imidazole glycerol phosphate synthase subunit HisF from Geobacter sulfurreducens (strain ATCC 51573 / DSM 12127 / PCA).